The primary structure comprises 345 residues: S-adenosylmethionine:tRNA ribosyltransferase-isomerase (345 aa).

This sequence belongs to the QueA family. As to quaternary structure, monomer.

The protein resides in the cytoplasm. It carries out the reaction 7-aminomethyl-7-carbaguanosine(34) in tRNA + S-adenosyl-L-methionine = epoxyqueuosine(34) in tRNA + adenine + L-methionine + 2 H(+). It functions in the pathway tRNA modification; tRNA-queuosine biosynthesis. In terms of biological role, transfers and isomerizes the ribose moiety from AdoMet to the 7-aminomethyl group of 7-deazaguanine (preQ1-tRNA) to give epoxyqueuosine (oQ-tRNA). In Helicobacter pylori (strain P12), this protein is S-adenosylmethionine:tRNA ribosyltransferase-isomerase.